Consider the following 292-residue polypeptide: tRNA pseudouridine synthase B (292 aa).

Aspartate 40 functions as the Nucleophile in the catalytic mechanism.

This sequence belongs to the pseudouridine synthase TruB family. Type 1 subfamily.

It carries out the reaction uridine(55) in tRNA = pseudouridine(55) in tRNA. Functionally, responsible for synthesis of pseudouridine from uracil-55 in the psi GC loop of transfer RNAs. This is tRNA pseudouridine synthase B from Mycoplasma capricolum subsp. capricolum (strain California kid / ATCC 27343 / NCTC 10154).